Here is a 498-residue protein sequence, read N- to C-terminus: Glycerol kinase (498 aa).

T12 provides a ligand contact to ADP. T12, T13, and S14 together coordinate ATP. T12 contacts sn-glycerol 3-phosphate. Residue R16 participates in ADP binding. 4 residues coordinate sn-glycerol 3-phosphate: R82, E83, Y134, and D244. Glycerol contacts are provided by R82, E83, Y134, D244, and Q245. ADP contacts are provided by T266 and G310. Residues T266, G310, Q314, and G411 each contribute to the ATP site. 2 residues coordinate ADP: G411 and N415.

It belongs to the FGGY kinase family.

The catalysed reaction is glycerol + ATP = sn-glycerol 3-phosphate + ADP + H(+). Its pathway is polyol metabolism; glycerol degradation via glycerol kinase pathway; sn-glycerol 3-phosphate from glycerol: step 1/1. Inhibited by fructose 1,6-bisphosphate (FBP). In terms of biological role, key enzyme in the regulation of glycerol uptake and metabolism. Catalyzes the phosphorylation of glycerol to yield sn-glycerol 3-phosphate. The polypeptide is Glycerol kinase (Azorhizobium caulinodans (strain ATCC 43989 / DSM 5975 / JCM 20966 / LMG 6465 / NBRC 14845 / NCIMB 13405 / ORS 571)).